The primary structure comprises 330 residues: D-lactate dehydrogenase (330 aa).

NAD(+) is bound by residues 156 to 157 (RI), Asp-176, 206 to 207 (VP), 233 to 235 (AAR), and Asp-259. Arg-235 is a catalytic residue. The active site involves Glu-264. His-296 serves as the catalytic Proton donor.

It belongs to the D-isomer specific 2-hydroxyacid dehydrogenase family.

The catalysed reaction is (R)-lactate + NAD(+) = pyruvate + NADH + H(+). The polypeptide is D-lactate dehydrogenase (ldhD) (Staphylococcus aureus (strain MRSA252)).